The following is a 247-amino-acid chain: 5-oxoprolinase subunit A 1 (247 aa).

It belongs to the LamB/PxpA family. As to quaternary structure, forms a complex composed of PxpA, PxpB and PxpC.

The enzyme catalyses 5-oxo-L-proline + ATP + 2 H2O = L-glutamate + ADP + phosphate + H(+). Its function is as follows. Catalyzes the cleavage of 5-oxoproline to form L-glutamate coupled to the hydrolysis of ATP to ADP and inorganic phosphate. This chain is 5-oxoprolinase subunit A 1, found in Ralstonia nicotianae (strain ATCC BAA-1114 / GMI1000) (Ralstonia solanacearum).